Reading from the N-terminus, the 128-residue chain is Holin-like protein CidA (128 aa).

A run of 3 helical transmembrane segments spans residues 23–43 (LIVE…IVIF), 58–78 (IGAL…AVGI), and 84–104 (ILAE…FVVM).

The protein belongs to the CidA/LrgA family. CidA subfamily.

The protein localises to the cell membrane. In terms of biological role, increases the activity of extracellular murein hydrolases possibly by mediating their export via hole formation. Inhibited by the antiholin-like proteins LrgAB. In an unstressed cell, the LrgAB products probably inhibit the function of the CidA protein. When a cell is stressed by the addition of antibiotics or by other factors in the environment, CidA possibly oligomerizes within the bacterial cell membrane, creating lesions that disrupt the proton motive force, which in turn results in loss of cell viability. These lesions are also hypothesized to regulate the subsequent cell lysis by either allowing the murein hydrolases access to the cell wall substrate and/or regulating their activity by a possible change in the cell wall pH that results from loss of membrane potential. The polypeptide is Holin-like protein CidA (Bacillus licheniformis (strain ATCC 14580 / DSM 13 / JCM 2505 / CCUG 7422 / NBRC 12200 / NCIMB 9375 / NCTC 10341 / NRRL NRS-1264 / Gibson 46)).